The primary structure comprises 464 residues: Glycine--tRNA ligase (464 aa).

Residues R104 and E175 each contribute to the substrate site. Residues 207-209 (RNE), 217-222 (FRTREF), 292-293 (EL), and 336-339 (GVNR) contribute to the ATP site. Residue 222–226 (FEQME) coordinates substrate. 332 to 336 (EPALG) contacts substrate.

This sequence belongs to the class-II aminoacyl-tRNA synthetase family. In terms of assembly, homodimer.

The protein resides in the cytoplasm. The catalysed reaction is tRNA(Gly) + glycine + ATP = glycyl-tRNA(Gly) + AMP + diphosphate. Its function is as follows. Catalyzes the attachment of glycine to tRNA(Gly). The sequence is that of Glycine--tRNA ligase from Leptospira interrogans serogroup Icterohaemorrhagiae serovar Lai (strain 56601).